A 501-amino-acid chain; its full sequence is Beta-secretase 1 (501 aa).

The signal sequence occupies residues 1 to 21; that stretch reads MAPALRWLLLWVGSGMLPAQG. The propeptide occupies 22 to 45; it reads THLGIRLPLRSGLAGPPLGLRLPR. The Extracellular portion of the chain corresponds to 22–457; the sequence is THLGIRLPLR…PQTDESTLMT (436 aa). The Peptidase A1 domain maps to 75-416; sequence YYVEMTVGSP…DRARKRIGFA (342 aa). D93 is an active-site residue. The residue at position 126 (K126) is an N6-acetyllysine. Residues N153, N172, and N223 are each glycosylated (N-linked (GlcNAc...) asparagine). Cystine bridges form between C216–C420, C278–C443, and C330–C380. N6-acetyllysine occurs at positions 275, 279, and 285. D289 is an active-site residue. N6-acetyllysine occurs at positions 299, 300, and 307. N354 carries N-linked (GlcNAc...) asparagine glycosylation. The helical transmembrane segment at 458-478 threads the bilayer; it reads IAYVMAAICALFMLPLCLMVC. 4 S-palmitoyl cysteine lipidation sites follow: C474, C478, C482, and C485. At 479 to 501 the chain is on the cytoplasmic side; it reads QWRCLRCLRHQHDDFADDISLLK. Residues 479 to 501 form an interaction with RTN3 region; sequence QWRCLRCLRHQHDDFADDISLLK. The short motif at 496–500 is the DXXLL element; sequence DISLL. A Phosphoserine modification is found at S498. Residue K501 forms a Glycyl lysine isopeptide (Lys-Gly) (interchain with G-Cter in ubiquitin) linkage.

Belongs to the peptidase A1 family. Monomer. Interacts (via DXXLL motif) with GGA1, GGA2 and GGA3 (via their VHS domain); the interaction highly increases when BACE1 is phosphorylated at Ser-498. Interacts with RTN1; RTN2; RTN3 and RTN4; the interaction leads to inhibition of amyloid precursor protein processing. Interacts with SNX6. Interacts with PCSK9. Interacts with NAT8 and NAT8B. Interacts with BIN1. Interacts (via extracellular domain) with ADAM10 (via extracellular domain). Interacts with SORL1; this interaction may affect binding with APP and hence reduce APP cleavage. Interacts with NRDC AND NRG1. In terms of processing, palmitoylation mediates lipid raft localization. Post-translationally, acetylated in the endoplasmic reticulum at Lys-126, Lys-275, Lys-279, Lys-285, Lys-299, Lys-300 and Lys-307. Acetylation by NAT8 and NAT8B is transient and deacetylation probably occurs in the Golgi. Acetylation regulates the maturation, the transport to the plasma membrane, the stability and the expression of the protein. Ubiquitinated at Lys-501, ubiquitination leads to lysosomal degradation. Monoubiquitinated and 'Lys-63'-linked polyubitinated. Deubiquitnated by USP8; inhibits lysosomal degradation. In terms of processing, phosphorylation at Ser-498 is required for interaction with GGA1 and retrograded transport from endosomal compartments to the trans-Golgi network. Non-phosphorylated BACE1 enters a direct recycling route to the cell surface. Post-translationally, N-Glycosylated. Addition of a bisecting N-acetylglucosamine by MGAT3 blocks lysosomal targeting, further degradation and is required for maintaining stability under stress conditions.

The protein localises to the cell membrane. It localises to the golgi apparatus. It is found in the trans-Golgi network. Its subcellular location is the endoplasmic reticulum. The protein resides in the endosome. The protein localises to the cell surface. It localises to the cytoplasmic vesicle membrane. It is found in the membrane raft. Its subcellular location is the lysosome. The protein resides in the late endosome. The protein localises to the early endosome. It localises to the recycling endosome. It is found in the cell projection. Its subcellular location is the axon. The protein resides in the dendrite. The catalysed reaction is Broad endopeptidase specificity. Cleaves Glu-Val-Asn-Leu-|-Asp-Ala-Glu-Phe in the Swedish variant of Alzheimer's amyloid precursor protein.. Its activity is regulated as follows. Inhibited by RTN3 and RTN4. Responsible for the proteolytic processing of the amyloid precursor protein (APP). Cleaves at the N-terminus of the A-beta peptide sequence, between residues 671 and 672 of APP, leads to the generation and extracellular release of beta-cleaved soluble APP, and a corresponding cell-associated C-terminal fragment which is later released by gamma-secretase. Cleaves CHL1. The chain is Beta-secretase 1 (Bace1) from Rattus norvegicus (Rat).